A 417-amino-acid chain; its full sequence is Serine hydroxymethyltransferase 1 (417 aa).

(6S)-5,6,7,8-tetrahydrofolate contacts are provided by residues Leu-121 and 125–127; that span reads GHL. Lys-230 bears the N6-(pyridoxal phosphate)lysine mark. 355-357 provides a ligand contact to (6S)-5,6,7,8-tetrahydrofolate; that stretch reads SPF.

The protein belongs to the SHMT family. Homodimer. The cofactor is pyridoxal 5'-phosphate.

The protein localises to the cytoplasm. The enzyme catalyses (6R)-5,10-methylene-5,6,7,8-tetrahydrofolate + glycine + H2O = (6S)-5,6,7,8-tetrahydrofolate + L-serine. It participates in one-carbon metabolism; tetrahydrofolate interconversion. It functions in the pathway amino-acid biosynthesis; glycine biosynthesis; glycine from L-serine: step 1/1. In terms of biological role, catalyzes the reversible interconversion of serine and glycine with tetrahydrofolate (THF) serving as the one-carbon carrier. This reaction serves as the major source of one-carbon groups required for the biosynthesis of purines, thymidylate, methionine, and other important biomolecules. Also exhibits THF-independent aldolase activity toward beta-hydroxyamino acids, producing glycine and aldehydes, via a retro-aldol mechanism. The sequence is that of Serine hydroxymethyltransferase 1 from Pseudomonas syringae pv. tomato (strain ATCC BAA-871 / DC3000).